The following is a 311-amino-acid chain: 4-hydroxy-tetrahydrodipicolinate synthase (311 aa).

T51 contacts pyruvate. Residue Y140 is the Proton donor/acceptor of the active site. The active-site Schiff-base intermediate with substrate is the K168. I209 serves as a coordination point for pyruvate.

Belongs to the DapA family. Homotetramer; dimer of dimers.

It is found in the cytoplasm. The catalysed reaction is L-aspartate 4-semialdehyde + pyruvate = (2S,4S)-4-hydroxy-2,3,4,5-tetrahydrodipicolinate + H2O + H(+). It participates in amino-acid biosynthesis; L-lysine biosynthesis via DAP pathway; (S)-tetrahydrodipicolinate from L-aspartate: step 3/4. Functionally, catalyzes the condensation of (S)-aspartate-beta-semialdehyde [(S)-ASA] and pyruvate to 4-hydroxy-tetrahydrodipicolinate (HTPA). This chain is 4-hydroxy-tetrahydrodipicolinate synthase, found in Streptococcus pneumoniae (strain Hungary19A-6).